Consider the following 357-residue polypeptide: SrfA-induced gene J protein (357 aa).

The interval 1–29 (MGRVEDQIKDNYNSLSHEGERLNREAKIE) is disordered. The stretch at 5-51 (EDQIKDNYNSLSHEGERLNREAKIESEKLKNNAKLDAKDMKKDIDES) forms a coiled coil. Over residues 17–29 (HEGERLNREAKIE) the composition is skewed to basic and acidic residues. 3 N-linked (GlcNAc...) asparagine glycosylation sites follow: Asn-114, Asn-157, and Asn-172. Coiled-coil stretches lie at residues 150–177 (KNFK…SNKI) and 223–270 (DETK…DAIE). Residues 290–307 (IWGSIGLIGGATATSYLF) traverse the membrane as a helical segment.

Its subcellular location is the membrane. The protein is SrfA-induced gene J protein (sigJ) of Dictyostelium discoideum (Social amoeba).